The sequence spans 408 residues: Aminoacylase-1 (408 aa).

Position 80 (histidine 80) interacts with Zn(2+). The active site involves aspartate 82. Aspartate 113 serves as a coordination point for Zn(2+). Glutamate 147 serves as the catalytic Proton acceptor. Positions 148, 175, and 373 each coordinate Zn(2+).

Belongs to the peptidase M20A family. As to quaternary structure, homodimer. Interacts with SPHK1. It depends on Zn(2+) as a cofactor.

It is found in the cytoplasm. The catalysed reaction is an N-acyl-L-amino acid + H2O = an L-alpha-amino acid + a carboxylate. It carries out the reaction N-acetyl-L-methionine + H2O = L-methionine + acetate. It catalyses the reaction N-acetyl-L-glutamine + H2O = L-glutamine + acetate. In terms of biological role, catalyzes the hydrolysis of N-acetylated amino acids to acetate and free amino acids. In Mus musculus (Mouse), this protein is Aminoacylase-1 (Acy1).